Here is a 284-residue protein sequence, read N- to C-terminus: 2-dehydro-3-deoxyphosphooctonate aldolase (284 aa).

It belongs to the KdsA family.

Its subcellular location is the cytoplasm. The enzyme catalyses D-arabinose 5-phosphate + phosphoenolpyruvate + H2O = 3-deoxy-alpha-D-manno-2-octulosonate-8-phosphate + phosphate. The protein operates within carbohydrate biosynthesis; 3-deoxy-D-manno-octulosonate biosynthesis; 3-deoxy-D-manno-octulosonate from D-ribulose 5-phosphate: step 2/3. It participates in bacterial outer membrane biogenesis; lipopolysaccharide biosynthesis. The chain is 2-dehydro-3-deoxyphosphooctonate aldolase from Glaesserella parasuis serovar 5 (strain SH0165) (Haemophilus parasuis).